Reading from the N-terminus, the 359-residue chain is Peptide chain release factor 1 (359 aa).

Glutamine 235 is modified (N5-methylglutamine).

Belongs to the prokaryotic/mitochondrial release factor family. In terms of processing, methylated by PrmC. Methylation increases the termination efficiency of RF1.

Its subcellular location is the cytoplasm. Functionally, peptide chain release factor 1 directs the termination of translation in response to the peptide chain termination codons UAG and UAA. The chain is Peptide chain release factor 1 from Anaplasma marginale (strain Florida).